Here is a 411-residue protein sequence, read N- to C-terminus: Small ribosomal subunit protein bS1c (411 aa).

A chloroplast-targeting transit peptide spans 1–41 (MASLAQQLAGGLRCPPLSNSNLSKPFSPKHTLKPRFSPIVS). 3 S1 motif domains span residues 96–166 (GSRV…LSLR), 184–248 (DVVV…MSNR), and 261–329 (GSVV…LSTK).

Belongs to the bacterial ribosomal protein bS1 family. Component of the chloroplast small ribosomal subunit (SSU). Mature 70S chloroplast ribosomes of higher plants consist of a small (30S) and a large (50S) subunit. The 30S small subunit contains 1 molecule of ribosomal RNA (16S rRNA) and 24 different proteins. The 50S large subunit contains 3 rRNA molecules (23S, 5S and 4.5S rRNA) and 33 different proteins.

The protein resides in the plastid. The protein localises to the chloroplast. In terms of biological role, component of the chloroplast ribosome (chloro-ribosome), a dedicated translation machinery responsible for the synthesis of chloroplast genome-encoded proteins, including proteins of the transcription and translation machinery and components of the photosynthetic apparatus. Actively engaged in the initiation complex formation via a strong mRNA-binding activity. Possesses a poly(A)-binding activity which might play a role as a control element in chloroplast mRNA translation. The sequence is that of Small ribosomal subunit protein bS1c (RPS1) from Spinacia oleracea (Spinach).